A 264-amino-acid chain; its full sequence is Elongator complex protein 6 (264 aa).

It belongs to the ELP6 family. In terms of assembly, component of the elongator complex.

Its subcellular location is the cytoplasm. The protein localises to the nucleus. It participates in tRNA modification; 5-methoxycarbonylmethyl-2-thiouridine-tRNA biosynthesis. Functionally, component of the elongator complex which is required for multiple tRNA modifications, including mcm5U (5-methoxycarbonylmethyl uridine), mcm5s2U (5-methoxycarbonylmethyl-2-thiouridine), and ncm5U (5-carbamoylmethyl uridine). The elongator complex catalyzes formation of carboxymethyluridine in the wobble base at position 34 in tRNAs. In Danio rerio (Zebrafish), this protein is Elongator complex protein 6 (elp6).